A 334-amino-acid polypeptide reads, in one-letter code: Putative transport protein MJ1177 (334 aa).

A run of 7 helical transmembrane segments spans residues 13-33 (VIVG…DVLA), 61-81 (LAIS…LLTF), 138-158 (IIDV…TFYF), 191-211 (SYKN…ILSY), 234-254 (LLPI…FFLI), 259-279 (KAVF…DFVI), and 293-313 (VLVV…GFAI).

It belongs to the autoinducer-2 exporter (AI-2E) (TC 2.A.86) family.

The protein localises to the cell membrane. The protein is Putative transport protein MJ1177 of Methanocaldococcus jannaschii (strain ATCC 43067 / DSM 2661 / JAL-1 / JCM 10045 / NBRC 100440) (Methanococcus jannaschii).